The chain runs to 131 residues: Small ribosomal subunit protein uS8 (131 aa).

Belongs to the universal ribosomal protein uS8 family. In terms of assembly, part of the 30S ribosomal subunit. Contacts proteins S5 and S12.

In terms of biological role, one of the primary rRNA binding proteins, it binds directly to 16S rRNA central domain where it helps coordinate assembly of the platform of the 30S subunit. The protein is Small ribosomal subunit protein uS8 of Acinetobacter baylyi (strain ATCC 33305 / BD413 / ADP1).